A 561-amino-acid chain; its full sequence is Putative transport protein YbjL (561 aa).

Transmembrane regions (helical) follow at residues 8–28, 32–52, 66–86, 94–114, and 158–178; these read LLNG…LCLG, LGSI…LLGQ, FMLF…SIFF, MLAL…GKLF, and NLSL…IVGA. RCK C-terminal domains follow at residues 200–288 and 292–373; these read RGLD…SFRN and VFDR…RIGF. 6 helical membrane passes run 383-403, 406-426, 451-471, 475-495, 503-523, and 540-560; these read LLAF…TFQF, FSFG…LGFM, VFMA…LGAI, MLIA…LFGA, ALLF…EIIS, and AIAN…CPGL.

It belongs to the AAE transporter (TC 2.A.81) family. YbjL subfamily.

Its subcellular location is the cell membrane. This Shigella dysenteriae serotype 1 (strain Sd197) protein is Putative transport protein YbjL.